A 76-amino-acid chain; its full sequence is Theta defensin subunit B (76 aa).

The first 22 residues, 1 to 22 (MRTFALLTAMLLLVALQPQAEA), serve as a signal peptide directing secretion. A propeptide spanning residues 23–64 (RQARADEAAAQQQPGADDQGMAHSFTRPENAALPLSESAKGL) is cleaved from the precursor. A disordered region spans residues 24 to 54 (QARADEAAAQQQPGADDQGMAHSFTRPENAA). Positions 30–44 (AAAQQQPGADDQGMA) are enriched in low complexity. Arg-65 participates in a covalent cross-link: Cyclopeptide (Arg-Cys) (interchain with C-73 in subunit A); in form BTD-1. A Cyclopeptide (Arg-Cys) (interchain with C-73 in subunit B); in form BTD-2 cross-link involves residue Arg-65. Cys-68 and Cys-73 are oxidised to a cystine. A Cyclopeptide (Cys-Arg) (interchain with R-65 in subunit A); in form BTD-1 cross-link involves residue Cys-73. Cys-73 is covalently cross-linked (Cyclopeptide (Cys-Arg) (interchain with R-65 in subunit B); in form BTD-2). Residues 74-76 (QLL) constitute a propeptide that is removed on maturation.

Belongs to the alpha-defensin family. Theta subfamily. In terms of assembly, BTD-1 is a cyclic heterodimer composed of subunits A and B; disulfide-linked. BTD-2 is a cyclic homodimer composed of two subunits B; disulfide-linked. In terms of processing, forms a cyclic peptide with subunit A (BTD-1), or subunit B (BTD-2). An additional intersubunit disulfide bond is formed.

Its function is as follows. BTD-1 and BTD-2 have antimicrobial activity against the Gram-negative bacterium E.coli ML35, the Gram-positive bacterium S.aureus 502a, and the fungus C.albicans 16820. BTD-2 is more effective against E.coli than BTD-1. In Papio anubis (Olive baboon), this protein is Theta defensin subunit B (BTDB).